Reading from the N-terminus, the 383-residue chain is Acetylornithine deacetylase (383 aa).

Zn(2+) is bound at residue histidine 80. The active site involves aspartate 82. Aspartate 112 serves as a coordination point for Zn(2+). Glutamate 144 is a catalytic residue. Residues glutamate 145, glutamate 169, and histidine 355 each contribute to the Zn(2+) site.

The protein belongs to the peptidase M20A family. ArgE subfamily. In terms of assembly, homodimer. Zn(2+) is required as a cofactor. Requires Co(2+) as cofactor. The cofactor is glutathione.

Its subcellular location is the cytoplasm. The catalysed reaction is N(2)-acetyl-L-ornithine + H2O = L-ornithine + acetate. Its pathway is amino-acid biosynthesis; L-arginine biosynthesis; L-ornithine from N(2)-acetyl-L-ornithine (linear): step 1/1. In terms of biological role, catalyzes the hydrolysis of the amide bond of N(2)-acetylated L-amino acids. Cleaves the acetyl group from N-acetyl-L-ornithine to form L-ornithine, an intermediate in L-arginine biosynthesis pathway, and a branchpoint in the synthesis of polyamines. The chain is Acetylornithine deacetylase from Shigella boydii serotype 4 (strain Sb227).